A 206-amino-acid chain; its full sequence is Ras-related protein RABG3d (206 aa).

GTP is bound at residue 15-22 (GDSGVGKT). The short motif at 37 to 45 (YKATIGADF) is the Effector region element. Residues 63–67 (DTAGQ), 125–128 (NKTD), and 158–159 (SA) each bind GTP. Residues Cys-204 and Cys-206 are each lipidated (S-geranylgeranyl cysteine). Cys-206 carries the post-translational modification Cysteine methyl ester.

Belongs to the small GTPase superfamily. Rab family.

The protein resides in the cell membrane. Intracellular vesicle trafficking and protein transport. The sequence is that of Ras-related protein RABG3d (RABG3D) from Arabidopsis thaliana (Mouse-ear cress).